We begin with the raw amino-acid sequence, 450 residues long: Tubulin alpha chain (450 aa).

GTP is bound at residue glutamine 11. Residue lysine 40 is modified to N6-acetyllysine. Residues glutamate 71, serine 140, glycine 144, threonine 145, threonine 179, asparagine 206, and asparagine 228 each coordinate GTP. Glutamate 71 lines the Mg(2+) pocket. The active site involves glutamate 254.

Belongs to the tubulin family. As to quaternary structure, dimer of alpha and beta chains. A typical microtubule is a hollow water-filled tube with an outer diameter of 25 nm and an inner diameter of 15 nM. Alpha-beta heterodimers associate head-to-tail to form protofilaments running lengthwise along the microtubule wall with the beta-tubulin subunit facing the microtubule plus end conferring a structural polarity. Microtubules usually have 13 protofilaments but different protofilament numbers can be found in some organisms and specialized cells. Requires Mg(2+) as cofactor. Post-translationally, acetylation of alpha chains at Lys-40 stabilizes microtubules and affects affinity and processivity of microtubule motors. This modification has a role in multiple cellular functions, ranging from cell motility, cell cycle progression or cell differentiation to intracellular trafficking and signaling.

Its subcellular location is the cytoplasm. It is found in the cytoskeleton. The enzyme catalyses GTP + H2O = GDP + phosphate + H(+). In terms of biological role, tubulin is the major constituent of microtubules, a cylinder consisting of laterally associated linear protofilaments composed of alpha- and beta-tubulin heterodimers. Microtubules grow by the addition of GTP-tubulin dimers to the microtubule end, where a stabilizing cap forms. Below the cap, tubulin dimers are in GDP-bound state, owing to GTPase activity of alpha-tubulin. The chain is Tubulin alpha chain from Oxytricha granulifera (Ciliate).